Here is a 130-residue protein sequence, read N- to C-terminus: DNA-directed RNA polymerase subunit omega (130 aa).

The tract at residues 80-130 is disordered; sequence PEPDTVPLIGSAGASVDADDTEVAPERMTEEELLKGLEGLAPPEEQPEEDE. A compositionally biased stretch (basic and acidic residues) spans 103 to 114; it reads APERMTEEELLK.

This sequence belongs to the RNA polymerase subunit omega family. In terms of assembly, the RNAP catalytic core consists of 2 alpha, 1 beta, 1 beta' and 1 omega subunit. When a sigma factor is associated with the core the holoenzyme is formed, which can initiate transcription.

It catalyses the reaction RNA(n) + a ribonucleoside 5'-triphosphate = RNA(n+1) + diphosphate. Promotes RNA polymerase assembly. Latches the N- and C-terminal regions of the beta' subunit thereby facilitating its interaction with the beta and alpha subunits. The protein is DNA-directed RNA polymerase subunit omega of Rhodopseudomonas palustris (strain BisB18).